The sequence spans 495 residues: Cysteine--tRNA ligase (495 aa).

Position 29 (Cys29) interacts with Zn(2+). The short motif at 31 to 41 is the 'HIGH' region element; sequence VTVYDDSHVGH. Zn(2+) is bound by residues Cys209, His234, and Glu238. Positions 266–270 match the 'KMSKS' region motif; it reads KMSKS. ATP is bound at residue Lys269.

This sequence belongs to the class-I aminoacyl-tRNA synthetase family. Monomer. Requires Zn(2+) as cofactor.

The protein resides in the cytoplasm. The enzyme catalyses tRNA(Cys) + L-cysteine + ATP = L-cysteinyl-tRNA(Cys) + AMP + diphosphate. In Aquifex aeolicus (strain VF5), this protein is Cysteine--tRNA ligase (cysS).